A 512-amino-acid polypeptide reads, in one-letter code: Retinaldehyde dehydrogenase 3 (512 aa).

Residues 1–22 form a disordered region; sequence MATANGAVENGQPDRKPPALPR. At Ala2 the chain carries N-acetylalanine. Residues Lys204, Glu207, and 257-262 contribute to the NAD(+) site; that span reads GSTEVG. Residue Glu280 is the Proton acceptor of the active site. The active-site Nucleophile is the Cys314. Residues Gln361 and Glu411 each contribute to the NAD(+) site.

This sequence belongs to the aldehyde dehydrogenase family. Homotetramer. In terms of tissue distribution, expressed at low levels in many tissues and at higher levels in salivary gland, stomach, and kidney.

It localises to the cytoplasm. The catalysed reaction is all-trans-retinal + NAD(+) + H2O = all-trans-retinoate + NADH + 2 H(+). It carries out the reaction retinal + NAD(+) + H2O = retinoate + NADH + 2 H(+). It catalyses the reaction all-trans-13,14-dihydroretinal + NAD(+) + H2O = all-trans-13,14-dihydroretinoate + NADH + 2 H(+). The protein operates within cofactor metabolism; retinol metabolism. Its function is as follows. Catalyzes the NAD-dependent oxidation of aldehyde substrates, such as all-trans-retinal and all-trans-13,14-dihydroretinal, to their corresponding carboxylic acids, all-trans-retinoate and all-trans-13,14-dihydroretinoate, respectively. High specificity for all-trans-retinal as substrate, can also accept acetaldehyde as substrate in vitro but with lower affinity. Required for the biosynthesis of normal levels of retinoate in the embryonic ocular and nasal regions; a critical lipid in the embryonic development of the eye and the nasal region. This Homo sapiens (Human) protein is Retinaldehyde dehydrogenase 3 (ALDH1A3).